An 80-amino-acid chain; its full sequence is Exodeoxyribonuclease 7 small subunit (80 aa).

This sequence belongs to the XseB family. Heterooligomer composed of large and small subunits.

It is found in the cytoplasm. The enzyme catalyses Exonucleolytic cleavage in either 5'- to 3'- or 3'- to 5'-direction to yield nucleoside 5'-phosphates.. Functionally, bidirectionally degrades single-stranded DNA into large acid-insoluble oligonucleotides, which are then degraded further into small acid-soluble oligonucleotides. The sequence is that of Exodeoxyribonuclease 7 small subunit from Shigella sonnei (strain Ss046).